The sequence spans 150 residues: UPF0756 membrane protein CGSHiEE_06715 (150 aa).

The next 4 helical transmembrane spans lie at 1–21 (MTLQ…LGVL), 52–72 (YGVK…LVSG), 81–101 (GFVS…AWLA), and 123–143 (IIGV…AGIL).

It belongs to the UPF0756 family.

The protein localises to the cell membrane. This chain is UPF0756 membrane protein CGSHiEE_06715, found in Haemophilus influenzae (strain PittEE).